The chain runs to 418 residues: Serine hydroxymethyltransferase (418 aa).

(6S)-5,6,7,8-tetrahydrofolate-binding positions include leucine 121 and 125 to 127 (GHL). Lysine 230 carries the N6-(pyridoxal phosphate)lysine modification. (6S)-5,6,7,8-tetrahydrofolate is bound at residue 355 to 357 (SPF).

This sequence belongs to the SHMT family. Homodimer. Pyridoxal 5'-phosphate is required as a cofactor.

Its subcellular location is the cytoplasm. The catalysed reaction is (6R)-5,10-methylene-5,6,7,8-tetrahydrofolate + glycine + H2O = (6S)-5,6,7,8-tetrahydrofolate + L-serine. Its pathway is one-carbon metabolism; tetrahydrofolate interconversion. It functions in the pathway amino-acid biosynthesis; glycine biosynthesis; glycine from L-serine: step 1/1. Catalyzes the reversible interconversion of serine and glycine with tetrahydrofolate (THF) serving as the one-carbon carrier. This reaction serves as the major source of one-carbon groups required for the biosynthesis of purines, thymidylate, methionine, and other important biomolecules. Also exhibits THF-independent aldolase activity toward beta-hydroxyamino acids, producing glycine and aldehydes, via a retro-aldol mechanism. The protein is Serine hydroxymethyltransferase of Streptococcus pneumoniae (strain P1031).